We begin with the raw amino-acid sequence, 743 residues long: F-box protein COS111 (743 aa).

Residues 145 to 191 (ELHIKNLPVEILDYIFYLVDDNLDYKSCMYTCKLFYFLAKPYYYENL) form the F-box domain. Disordered stretches follow at residues 224 to 257 (IKPG…DPQY) and 311 to 330 (FSNV…SSST). A compositionally biased stretch (acidic residues) spans 229 to 248 (DEDEQEEGQEENAENGEEEN).

Functionally, F-box protein probably involved in ubiquitin conjugation pathway. This chain is F-box protein COS111 (COS111), found in Candida albicans (strain SC5314 / ATCC MYA-2876) (Yeast).